The following is a 197-amino-acid chain: Pyridoxal 5'-phosphate synthase subunit PdxT (197 aa).

Residue 53–55 (GES) coordinates L-glutamine. The active-site Nucleophile is C85. Residues R114 and 142–143 (IR) contribute to the L-glutamine site. Residues H179 and E181 each act as charge relay system in the active site.

This sequence belongs to the glutaminase PdxT/SNO family. In the presence of PdxS, forms a dodecamer of heterodimers. Only shows activity in the heterodimer.

The catalysed reaction is aldehydo-D-ribose 5-phosphate + D-glyceraldehyde 3-phosphate + L-glutamine = pyridoxal 5'-phosphate + L-glutamate + phosphate + 3 H2O + H(+). The enzyme catalyses L-glutamine + H2O = L-glutamate + NH4(+). It functions in the pathway cofactor biosynthesis; pyridoxal 5'-phosphate biosynthesis. Functionally, catalyzes the hydrolysis of glutamine to glutamate and ammonia as part of the biosynthesis of pyridoxal 5'-phosphate. The resulting ammonia molecule is channeled to the active site of PdxS. This chain is Pyridoxal 5'-phosphate synthase subunit PdxT, found in Thermococcus kodakarensis (strain ATCC BAA-918 / JCM 12380 / KOD1) (Pyrococcus kodakaraensis (strain KOD1)).